The primary structure comprises 334 residues: Malate dehydrogenase, cytoplasmic (334 aa).

11 to 17 (GAAGQIA) provides a ligand contact to NAD(+). Positions 92 and 98 each coordinate substrate. NAD(+)-binding positions include asparagine 105, glutamine 112, and 129 to 131 (VGN). Substrate is bound by residues asparagine 131 and arginine 162. Histidine 187 serves as the catalytic Proton acceptor.

The protein belongs to the LDH/MDH superfamily. MDH type 2 family. Homodimer.

It localises to the cytoplasm. The protein resides in the cytosol. The catalysed reaction is (S)-malate + NAD(+) = oxaloacetate + NADH + H(+). The enzyme catalyses (S)-2-hydroxyglutarate + NAD(+) = 2-oxoglutarate + NADH + H(+). In terms of biological role, catalyzes the reduction of aromatic alpha-keto acids in the presence of NADH. Plays essential roles in the malate-aspartate shuttle and the tricarboxylic acid cycle, important in mitochondrial NADH supply for oxidative phosphorylation. Catalyzes the reduction of 2-oxoglutarate to 2-hydroxyglutarate, leading to elevated reactive oxygen species (ROS). The protein is Malate dehydrogenase, cytoplasmic (MDH1) of Gallus gallus (Chicken).